We begin with the raw amino-acid sequence, 1037 residues long: Presequence protease, mitochondrial (1037 aa).

The N-terminal 15 residues, 1–15 (MWRCGGRQGLGVLRR), are a transit peptide targeting the mitochondrion. His-104 contributes to the Zn(2+) binding site. Residue Glu-107 is the Proton acceptor of the active site. Zn(2+)-binding residues include His-108 and Glu-205. Cys-119 and Cys-556 are oxidised to a cystine. Lys-759 is subject to N6-acetyllysine. At Lys-770 the chain carries N6-acetyllysine; alternate. An N6-succinyllysine; alternate modification is found at Lys-770. The tract at residues 803–834 (IGRSKKERRPVRPHTVEKPVPSSSGGDAHVPH) is disordered. Positions 804 to 814 (GRSKKERRPVR) are enriched in basic residues. At Lys-849 the chain carries N6-succinyllysine. Lys-884 carries the post-translational modification N6-acetyllysine. Lys-946 carries the N6-succinyllysine modification.

The protein belongs to the peptidase M16 family. PreP subfamily. As to quaternary structure, monomer and homodimer; homodimerization is induced by binding of the substrate. Zn(2+) serves as cofactor. A disulfide bond locks the enzyme in the closed conformation preventing substrate entry into the catalytic chamber.

It is found in the mitochondrion matrix. Its activity is regulated as follows. Mainly exists in a closed and catalytically competent conformation but a closed-to-open switch allows substrate entry into the catalytic chamber. Substrate binding induces closure and dimerization. A disulfide bond may lock the enzyme in a closed conformation preventing substrate entry into the catalytic chamber, participating in redox regulation of the enzyme. Inhibited by metal-chelating agents. Inhibited by nickel and zinc excess, and slightly activated by manganese. Its function is as follows. Metalloendopeptidase of the mitochondrial matrix that functions in peptide cleavage and degradation rather than in protein processing. Has an ATP-independent activity. Specifically cleaves peptides in the range of 5 to 65 residues. Shows a preference for cleavage after small polar residues and before basic residues, but without any positional preference. Degrades the transit peptides of mitochondrial proteins after their cleavage. Also degrades other unstructured peptides. It is also able to degrade amyloid-beta protein 40, one of the peptides produced by APP processing, when it accumulates in mitochondrion. It is a highly efficient protease, at least toward amyloid-beta protein 40. Cleaves that peptide at a specific position and is probably not processive, releasing digested peptides intermediates that can be further cleaved subsequently. It is also able to degrade amyloid-beta protein 42. The protein is Presequence protease, mitochondrial of Pongo abelii (Sumatran orangutan).